The sequence spans 398 residues: 4-hydroxy-3-methylbut-2-enyl diphosphate reductase (398 aa).

Position 66 (C66) interacts with [4Fe-4S] cluster. Position 96 (H96) interacts with (2E)-4-hydroxy-3-methylbut-2-enyl diphosphate. Dimethylallyl diphosphate is bound at residue H96. H96 provides a ligand contact to isopentenyl diphosphate. A [4Fe-4S] cluster-binding site is contributed by C157. H185 provides a ligand contact to (2E)-4-hydroxy-3-methylbut-2-enyl diphosphate. H185 is a binding site for dimethylallyl diphosphate. H185 provides a ligand contact to isopentenyl diphosphate. Catalysis depends on E187, which acts as the Proton donor. T250 serves as a coordination point for (2E)-4-hydroxy-3-methylbut-2-enyl diphosphate. C288 contacts [4Fe-4S] cluster. The (2E)-4-hydroxy-3-methylbut-2-enyl diphosphate site is built by S317, S318, N319, and S380. 4 residues coordinate dimethylallyl diphosphate: S317, S318, N319, and S380. Isopentenyl diphosphate contacts are provided by S317, S318, N319, and S380.

This sequence belongs to the IspH family. [4Fe-4S] cluster serves as cofactor.

The catalysed reaction is isopentenyl diphosphate + 2 oxidized [2Fe-2S]-[ferredoxin] + H2O = (2E)-4-hydroxy-3-methylbut-2-enyl diphosphate + 2 reduced [2Fe-2S]-[ferredoxin] + 2 H(+). It catalyses the reaction dimethylallyl diphosphate + 2 oxidized [2Fe-2S]-[ferredoxin] + H2O = (2E)-4-hydroxy-3-methylbut-2-enyl diphosphate + 2 reduced [2Fe-2S]-[ferredoxin] + 2 H(+). It participates in isoprenoid biosynthesis; dimethylallyl diphosphate biosynthesis; dimethylallyl diphosphate from (2E)-4-hydroxy-3-methylbutenyl diphosphate: step 1/1. Its pathway is isoprenoid biosynthesis; isopentenyl diphosphate biosynthesis via DXP pathway; isopentenyl diphosphate from 1-deoxy-D-xylulose 5-phosphate: step 6/6. Functionally, catalyzes the conversion of 1-hydroxy-2-methyl-2-(E)-butenyl 4-diphosphate (HMBPP) into a mixture of isopentenyl diphosphate (IPP) and dimethylallyl diphosphate (DMAPP). Acts in the terminal step of the DOXP/MEP pathway for isoprenoid precursor biosynthesis. The polypeptide is 4-hydroxy-3-methylbut-2-enyl diphosphate reductase (Prochlorococcus marinus subsp. pastoris (strain CCMP1986 / NIES-2087 / MED4)).